The chain runs to 471 residues: Glutamyl-tRNA(Gln) amidotransferase subunit A, mitochondrial (471 aa).

Active-site charge relay system residues include Lys64 and Ser141. Ser165 (acyl-ester intermediate) is an active-site residue.

The protein belongs to the amidase family. GatA subfamily. In terms of assembly, subunit of the heterotrimeric GatCAB amidotransferase (AdT) complex, composed of A, B and C subunits.

The protein localises to the mitochondrion. The enzyme catalyses L-glutamyl-tRNA(Gln) + L-glutamine + ATP + H2O = L-glutaminyl-tRNA(Gln) + L-glutamate + ADP + phosphate + H(+). Its function is as follows. Allows the formation of correctly charged Gln-tRNA(Gln) through the transamidation of misacylated Glu-tRNA(Gln) in the mitochondria. The reaction takes place in the presence of glutamine and ATP through an activated gamma-phospho-Glu-tRNA(Gln). The chain is Glutamyl-tRNA(Gln) amidotransferase subunit A, mitochondrial from Schizosaccharomyces pombe (strain 972 / ATCC 24843) (Fission yeast).